Here is a 237-residue protein sequence, read N- to C-terminus: Endoglucanase-1 (237 aa).

Residues 1–16 form the signal peptide; sequence MKAFHLLAALAGAAVA. The residue at position 17 (glutamine 17) is a Pyrrolidone carboxylic acid.

It belongs to the glycosyl hydrolase 12 (cellulase H) family.

It is found in the secreted. It catalyses the reaction Endohydrolysis of (1-&gt;4)-beta-D-glucosidic linkages in cellulose, lichenin and cereal beta-D-glucans.. In Aspergillus aculeatus, this protein is Endoglucanase-1.